A 233-amino-acid chain; its full sequence is UPF0502 protein YPTS_2082 (233 aa).

Belongs to the UPF0502 family.

The polypeptide is UPF0502 protein YPTS_2082 (Yersinia pseudotuberculosis serotype IB (strain PB1/+)).